The following is a 281-amino-acid chain: Probable ABC transporter ATP-binding protein AZC_3926 (281 aa).

The segment at 1–38 (MNVLSMFGRNATRETSSPAATAGRYADEGDWEGDDHQP) is disordered. Residues 45 to 277 (LAAFGLAKSY…PDVRRLYLGE (233 aa)) form the ABC transporter domain. 77–84 (GPNGAGKT) serves as a coordination point for ATP.

This sequence belongs to the ABC transporter superfamily.

This chain is Probable ABC transporter ATP-binding protein AZC_3926, found in Azorhizobium caulinodans (strain ATCC 43989 / DSM 5975 / JCM 20966 / LMG 6465 / NBRC 14845 / NCIMB 13405 / ORS 571).